Consider the following 302-residue polypeptide: Probable proteasome inhibitor (302 aa).

A2 bears the N-acetylalanine mark. Disordered regions lie at residues 151 to 188 (LDGK…QIHP) and 259 to 302 (ARFD…SDFI). Residues 259 to 269 (ARFDPYGPPGV) are compositionally biased toward pro residues.

The protein belongs to the proteasome inhibitor PI31 family.

Functionally, could play an important role in control of proteasome function. Inhibits the hydrolysis of protein and peptide substrates by the 20S proteasome. In Arabidopsis thaliana (Mouse-ear cress), this protein is Probable proteasome inhibitor.